The sequence spans 956 residues: Run domain Beclin-1-interacting and cysteine-rich domain-containing protein (956 aa).

In terms of domain architecture, RUN spans 49–190 (WSKYGGLERL…PRLLAQIDAS (142 aa)). Residues 50 to 181 (SKYGGLERLC…CLEAVEQNNP (132 aa)) form an interaction with PIK3C3 region. Ser198 carries the post-translational modification Phosphoserine. Residues 205–437 (SQSLTALPGS…ITIIVEDPIA (233 aa)) are interaction with YWHAB. Low complexity predominate over residues 233–242 (SLQSMPQSSH). The tract at residues 233 to 423 (SLQSMPQSSH…TNIASRGAAG (191 aa)) is disordered. Phosphoserine occurs at positions 250 and 268. Over residues 270–319 (AETQTTPAPLPSDSTLAQDSPLTAQEMSDSTLTSPLEASWVSSQNDSPSD) the composition is skewed to polar residues. The interaction with UVRAG stretch occupies residues 302–585 (TSPLEASWVS…DLEIQDADIR (284 aa)). The span at 339–371 (ASCESHSSNGESSSSHLFSSSSSQKLESAASSL) shows a compositional bias: low complexity. The segment covering 379-395 (QSQAGSVLRRSSFSEGQ) has biased composition (polar residues). Phosphoserine is present on residues Ser390, Ser412, Ser513, and Ser547. The segment at 490–542 (AIELMKCNMMSQCLEEEEVEEEDSDREIQELKQKIRLRRQQIRTKNLLPAYRE) is interaction with BECN1. Residues 547–566 (SFRVTSSSSQFSSRDSTQLS) are compositionally biased toward low complexity. A disordered region spans residues 547-579 (SFRVTSSSSQFSSRDSTQLSESGSAEDADDLEI). Residues 552-609 (SSSSQFSSRDSTQLSESGSAEDADDLEIQDADIRRSAVSNGKSSFSQNLSHCFLHSTS) are interaction with CYBA. Over residues 570-579 (SAEDADDLEI) the composition is skewed to acidic residues. At Ser655 the chain carries Phosphoserine. Residues 656-744 (PDDGQHADIY…HENAQMVVPS (89 aa)) are interaction with CARD9. An interaction with Rab7 region spans residues 705–956 (CAGCGIRTDP…ALEATVLETT (252 aa)).

As to quaternary structure, associates with PI3K (PI3KC3/PI3K-III/class III phosphatidylinositol 3-kinase) complex II (PI3KC3-C2) in which the core composed of the catalytic subunit PIK3C3, the regulatory subunit PIK3R4 and BECN1 is associated with UVRAG; in the complex interacts directly with PI3KC3 and UVRAG. Interacts with Rab7 (RAB7A or RAB7B) (GTP-bound form); Rab7 and UVRAG compete for RUBCN binding; can interact simultaneously with Rab7 and the PI3K complex. Interacts with CYBA and CYBB; indicative for the association with the CYBA:CYBB NADPH oxidase heterodimer. Interacts with NOX4 and probably associates with the CYBA:NOX4 complex. Interacts with YWHAB and CARD9 in a competitive and stimulation-dependent manner; RUBCN exchanges interaction from YWHAB to CARD9 upon stimulation with beta-1,3-glucan.

The protein localises to the late endosome. It localises to the lysosome. Its subcellular location is the early endosome. Inhibits PIK3C3 activity; under basal conditions negatively regulates PI3K complex II (PI3KC3-C2) function in autophagy. Negatively regulates endosome maturation and degradative endocytic trafficking and impairs autophagosome maturation process. Can sequester UVRAG from association with a class C Vps complex (possibly the HOPS complex) and negatively regulates Rab7 activation. In terms of biological role, involved in regulation of pathogen-specific host defense of activated macrophages. Following bacterial infection promotes NADH oxidase activity by association with CYBA thereby affecting TLR2 signaling and probably other TLR-NOX pathways. Stabilizes the CYBA:CYBB NADPH oxidase heterodimer, increases its association with TLR2 and its phagosome trafficking to induce antimicrobial burst of ROS and production of inflammatory cytokines. Following fungal or viral infection (implicating CLEC7A (dectin-1)-mediated myeloid cell activation or RIGI-dependent sensing of RNA viruses) negatively regulates pro-inflammatory cytokine production by association with CARD9 and sequestering it from signaling complexes. This Mus musculus (Mouse) protein is Run domain Beclin-1-interacting and cysteine-rich domain-containing protein.